Consider the following 121-residue polypeptide: Small ribosomal subunit protein uS13 (121 aa).

The tract at residues 94–121 (GLPVRGQSSKTNARTVKGPRKTVANKKK) is disordered. Residues 110 to 121 (KGPRKTVANKKK) show a composition bias toward basic residues.

The protein belongs to the universal ribosomal protein uS13 family. As to quaternary structure, part of the 30S ribosomal subunit. Forms a loose heterodimer with protein S19. Forms two bridges to the 50S subunit in the 70S ribosome.

Its function is as follows. Located at the top of the head of the 30S subunit, it contacts several helices of the 16S rRNA. In the 70S ribosome it contacts the 23S rRNA (bridge B1a) and protein L5 of the 50S subunit (bridge B1b), connecting the 2 subunits; these bridges are implicated in subunit movement. Contacts the tRNAs in the A and P-sites. This Mesoplasma florum (strain ATCC 33453 / NBRC 100688 / NCTC 11704 / L1) (Acholeplasma florum) protein is Small ribosomal subunit protein uS13.